The following is a 362-amino-acid chain: Heat-inducible transcription repressor HrcA (362 aa).

The protein belongs to the HrcA family.

Negative regulator of class I heat shock genes (grpE-dnaK-dnaJ and groELS operons). Prevents heat-shock induction of these operons. The polypeptide is Heat-inducible transcription repressor HrcA (Bradyrhizobium sp. (strain ORS 278)).